The chain runs to 220 residues: Chaperone protein TorD (220 aa).

The protein belongs to the TorD/DmsD family. TorD subfamily.

Its subcellular location is the cytoplasm. Its function is as follows. Involved in the biogenesis of TorA. Acts on TorA before the insertion of the molybdenum cofactor and, as a result, probably favors a conformation of the apoenzyme that is competent for acquiring the cofactor. In Vibrio cholerae serotype O1 (strain M66-2), this protein is Chaperone protein TorD.